The primary structure comprises 266 residues: GATA-type zinc finger protein 1 (266 aa).

Disordered regions lie at residues 1–31 (MEAA…KSRP), 106–129 (TQCP…PRKQ), and 171–191 (CSQK…SSEA). Positions 106 to 121 (TQCPNLEISSATSPAS) are enriched in polar residues. The GATA-type zinc finger occupies 197–221 (CASCRTQRTPLWRDAEDGTPLCNAC).

Specifically expressed in adult testis and ovary. Expressed at high levels in the somatic cells of the developing gonads, including Leydig cells in the testes and granulosa cells in the ovaries.

The protein resides in the nucleus. Transcriptional regulator that plays a key role in germ cell development. Determines the oogenic fate by activating key genes for the oogenic program and meiotic prophase entry. Acts downstream of bone morphogenetic protein (BMP) by regulating expression of genes required for the oogenic programs, which are repressed by Polycomb activities in sexually uncommitted germ cells. Regulates expression of STRA8, a central downstream effector for the meiotic program. Acts independently of retinoic acid (RA). In males, not required for germ-cell sex determination, but required to allow the spermatogonia to efficiently accomplish the meiotic prophase. This chain is GATA-type zinc finger protein 1, found in Mus musculus (Mouse).